Reading from the N-terminus, the 251-residue chain is Pyrroloquinoline-quinone synthase (251 aa).

The protein belongs to the PqqC family.

The enzyme catalyses 6-(2-amino-2-carboxyethyl)-7,8-dioxo-1,2,3,4,7,8-hexahydroquinoline-2,4-dicarboxylate + 3 O2 = pyrroloquinoline quinone + 2 H2O2 + 2 H2O + H(+). It functions in the pathway cofactor biosynthesis; pyrroloquinoline quinone biosynthesis. Functionally, ring cyclization and eight-electron oxidation of 3a-(2-amino-2-carboxyethyl)-4,5-dioxo-4,5,6,7,8,9-hexahydroquinoline-7,9-dicarboxylic-acid to PQQ. This Pseudomonas entomophila (strain L48) protein is Pyrroloquinoline-quinone synthase.